Here is a 297-residue protein sequence, read N- to C-terminus: Bifunctional protein FolD (297 aa).

NADP(+) contacts are provided by residues 169–171, Ser-196, and Ile-237; that span reads GRS.

This sequence belongs to the tetrahydrofolate dehydrogenase/cyclohydrolase family. As to quaternary structure, homodimer.

The enzyme catalyses (6R)-5,10-methylene-5,6,7,8-tetrahydrofolate + NADP(+) = (6R)-5,10-methenyltetrahydrofolate + NADPH. It catalyses the reaction (6R)-5,10-methenyltetrahydrofolate + H2O = (6R)-10-formyltetrahydrofolate + H(+). The protein operates within one-carbon metabolism; tetrahydrofolate interconversion. Catalyzes the oxidation of 5,10-methylenetetrahydrofolate to 5,10-methenyltetrahydrofolate and then the hydrolysis of 5,10-methenyltetrahydrofolate to 10-formyltetrahydrofolate. The sequence is that of Bifunctional protein FolD from Salinibacter ruber (strain DSM 13855 / M31).